The following is a 126-amino-acid chain: Holo-[acyl-carrier-protein] synthase (126 aa).

Mg(2+) is bound by residues aspartate 9 and glutamate 58.

This sequence belongs to the P-Pant transferase superfamily. AcpS family. It depends on Mg(2+) as a cofactor.

The protein resides in the cytoplasm. The catalysed reaction is apo-[ACP] + CoA = holo-[ACP] + adenosine 3',5'-bisphosphate + H(+). In terms of biological role, transfers the 4'-phosphopantetheine moiety from coenzyme A to a Ser of acyl-carrier-protein. The sequence is that of Holo-[acyl-carrier-protein] synthase from Aliivibrio salmonicida (strain LFI1238) (Vibrio salmonicida (strain LFI1238)).